The primary structure comprises 460 residues: Fumarate hydratase class II (460 aa).

Substrate is bound by residues 95–97, 126–129, 136–138, and Thr184; these read SGT, HPND, and SSN. The active-site Proton donor/acceptor is the His185. Ser315 is an active-site residue. Substrate contacts are provided by residues Ser316 and 321–323; that span reads KIN.

The protein belongs to the class-II fumarase/aspartase family. Fumarase subfamily. Homotetramer.

It is found in the cytoplasm. It carries out the reaction (S)-malate = fumarate + H2O. Its pathway is carbohydrate metabolism; tricarboxylic acid cycle; (S)-malate from fumarate: step 1/1. Functionally, involved in the TCA cycle. Catalyzes the stereospecific interconversion of fumarate to L-malate. This chain is Fumarate hydratase class II, found in Chlamydia caviae (strain ATCC VR-813 / DSM 19441 / 03DC25 / GPIC) (Chlamydophila caviae).